The primary structure comprises 344 residues: Trace amine-associated receptor 8b (344 aa).

Residues 1–31 (MTSNFSQPALQLCYENTNGSCIKTPYSPGPR) lie on the Extracellular side of the membrane. 2 N-linked (GlcNAc...) asparagine glycosylation sites follow: Asn4 and Asn18. 2 cysteine pairs are disulfide-bonded: Cys21–Cys185 and Cys104–Cys189. Residues 32-52 (VILYMVFGFGAVLAVCGNLLV) form a helical membrane-spanning segment. Over 53 to 67 (VISVLHFKQLHSPAN) the chain is Cytoplasmic. The helical transmembrane segment at 68–88 (FLIASLASADFLVGISVMPFS) threads the bilayer. At 89-111 (MVRSIESCWYFGDAFCSLHSCCD) the chain is on the extracellular side. The chain crosses the membrane as a helical span at residues 112–132 (VAFCYSSALHLCFISVDRYIA). The Cytoplasmic segment spans residues 133–146 (VTDPLVYPTKFTVS). Residues 147–167 (VSGICISISWILPLVYSSAVF) traverse the membrane as a helical segment. Residues 168 to 195 (YTGISAKGIESLVSALNCVGGCQIVVNQ) are Extracellular-facing. The chain crosses the membrane as a helical span at residues 196 to 216 (DWVLIDFLLFFIPTLVMIILY). Residues 217–260 (SKIFLVAKQQAVKIETSVSDNRGESSSESHKARVAKRERKAAKT) lie on the Cytoplasmic side of the membrane. A helical transmembrane segment spans residues 261–281 (LGVTVVAFMVSWLPYTIDSLV). Asp282 is a topological domain (extracellular). Residues 283–303 (AFVGFITPAYVYEICCWSAYY) traverse the membrane as a helical segment. Residues 304 to 344 (NSAMNPLIYAFFYPWFRKAIKLILSGEILKSHSSTMSLFSE) lie on the Cytoplasmic side of the membrane.

Belongs to the G-protein coupled receptor 1 family. Specifically expressed in neurons of the olfactory epithelium.

Its subcellular location is the cell membrane. In terms of biological role, olfactory receptor specific for trace amines. Trace amine compounds are enriched in animal body fluids and act on trace amine-associated receptors (TAARs) to elicit both intraspecific and interspecific innate behaviors. Ligand-binding causes a conformation change that triggers signaling via G alpha proteins, possibly G(i)/G(o) G alpha proteins. This Mus musculus (Mouse) protein is Trace amine-associated receptor 8b.